The sequence spans 147 residues: uncharacterized protein (147 aa).

Residues 69 to 89 (IFFFLSLYLSSIKIPMLILNI) traverse the membrane as a helical segment.

It localises to the membrane. This is an uncharacterized protein from Saccharomyces cerevisiae (strain ATCC 204508 / S288c) (Baker's yeast).